The following is a 166-amino-acid chain: Phosphopantetheine adenylyltransferase (166 aa).

A substrate-binding site is contributed by Ser-11. Residues 11–12 (SF) and His-19 each bind ATP. Substrate-binding residues include Lys-43, Val-80, and Arg-94. Residues 95–97 (GLR), Glu-105, and 130–136 (VRTVTAT) contribute to the ATP site.

It belongs to the bacterial CoaD family. Homohexamer. Requires Mg(2+) as cofactor.

The protein resides in the cytoplasm. The catalysed reaction is (R)-4'-phosphopantetheine + ATP + H(+) = 3'-dephospho-CoA + diphosphate. It functions in the pathway cofactor biosynthesis; coenzyme A biosynthesis; CoA from (R)-pantothenate: step 4/5. In terms of biological role, reversibly transfers an adenylyl group from ATP to 4'-phosphopantetheine, yielding dephospho-CoA (dPCoA) and pyrophosphate. The chain is Phosphopantetheine adenylyltransferase from Chelativorans sp. (strain BNC1).